Reading from the N-terminus, the 421-residue chain is MNIPKILNNNLVLKRIFCRNYSVKVLGIETSCDDTAVAIVNEKREILSSERYTERAIQRQQGGINPSVCALQHRENLPRLIEKCLNDAGTSPKDLDAVAVTVTPGLVIALKEGISAAIGFAKKHRLPLIPVHHMRAHALSILLVDDSVRFPFSAVLLSGGHALISVAEDVEKFKLYGQSVSGSPGECIDKVARQLGDLGSEFDGIHVGAAVEILASRASADGHLRYPIFLPNVPKANMNFDQIKGSYLNLLERLRKNSETSIDIPDFCASLQNTVARHISSKLHIFFESLSEQEKLPKQLVIGGGVAANQYIFGAISKLSAAHNVTTIKVLLSLCTDNAEMIAYSGLLMLVNRSEAIWWRPNDIPDTIYAHARSDIGTDASSEIIDTPRRKLVTSTIHGTERIRFRNLDDFKKPKSPKTTE.

A mitochondrion-targeting transit peptide spans methionine 1–serine 22. A divalent metal cation contacts are provided by histidine 133 and histidine 137. Substrate is bound by residues leucine 156–glycine 160, aspartate 189, glycine 208, glutamate 212, alanine 308–asparagine 309, and threonine 336. Aspartate 337 provides a ligand contact to a divalent metal cation.

The protein belongs to the KAE1 / TsaD family. In terms of assembly, homodimer. A divalent metal cation serves as cofactor.

Its subcellular location is the mitochondrion. It catalyses the reaction L-threonylcarbamoyladenylate + adenosine(37) in tRNA = N(6)-L-threonylcarbamoyladenosine(37) in tRNA + AMP + H(+). In terms of biological role, required for the formation of a threonylcarbamoyl group on adenosine at position 37 (t(6)A37) in mitochondrial tRNAs that read codons beginning with adenine. Probably involved in the transfer of the threonylcarbamoyl moiety of threonylcarbamoyl-AMP (TC-AMP) to the N6 group of A37. Involved in mitochondrial genome maintenance. This Caenorhabditis elegans protein is Probable tRNA N6-adenosine threonylcarbamoyltransferase, mitochondrial.